A 444-amino-acid polypeptide reads, in one-letter code: MIEDNKENKDHSLERGRATLIFSLKNEVGGLIKALKIFQEKHVNLLHIESRKSKRRNSEFEIFVDCDTNREQLNDIFHLLKSHTNVLSVTPPDNFTMKEEGMESVPWFPKKISDLDHCANRVLMYGSELDADHPGFKDNVYRKRRKYFADLAMSYKYGDPIPKVEFTEEEIKTWGTVFRELNKLYPTHACREYLKNLPLLSKYCGYREDNIPQLEDISNFLKERTGFSIRPVAGYLSPRDFLSGLAFRVFHCTQYVRHSSDPFYTPEPDTCHELLGHVPLLAEPSFAQFSQEIGLASLGASEEAVQKLATCYFFTVEFGLCKQDGQLRVFGAGLLSSISELKHVLSGHAKVKPFDPKITYKQECLITTFQDVYFVSESFEDAKEKMREFTKTIKRPFGVKYNPYTRSIQILKDAKSITNAMNELRHDLDVVSDALGKVSRQLSV.

One can recognise an ACT domain in the interval Thr19–Asn94. Position 58 is a phosphoserine; by PKA (Ser58). Tyr235, Arg257, and Thr265 together coordinate L-tryptophan. Positions 272, 277, and 317 each coordinate Fe cation. Ser336 and Ile366 together coordinate L-tryptophan.

The protein belongs to the biopterin-dependent aromatic amino acid hydroxylase family. As to quaternary structure, homotetramer. Interacts with DNAJC12. It depends on Fe(2+) as a cofactor. Ubiquitinated, leading to its degradation by the proteasome. Ubiquitinated is triggered by phosphorylation. In terms of processing, phosphorylated; triggering degradation by the proteasome.

It carries out the reaction (6R)-L-erythro-5,6,7,8-tetrahydrobiopterin + L-tryptophan + O2 = 5-hydroxy-L-tryptophan + (4aS,6R)-4a-hydroxy-L-erythro-5,6,7,8-tetrahydrobiopterin. It functions in the pathway aromatic compound metabolism; serotonin biosynthesis; serotonin from L-tryptophan: step 1/2. Its function is as follows. Oxidizes L-tryptophan to 5-hydroxy-l-tryptophan in the rate-determining step of serotonin biosynthesis. This Oryctolagus cuniculus (Rabbit) protein is Tryptophan 5-hydroxylase 1 (TPH1).